Here is a 195-residue protein sequence, read N- to C-terminus: Orotate phosphoribosyltransferase (195 aa).

117 to 125 (EDITTTGGS) contacts 5-phospho-alpha-D-ribose 1-diphosphate. Orotate-binding residues include Thr121 and Arg149.

The protein belongs to the purine/pyrimidine phosphoribosyltransferase family. PyrE subfamily. Homodimer. The cofactor is Mg(2+).

The catalysed reaction is orotidine 5'-phosphate + diphosphate = orotate + 5-phospho-alpha-D-ribose 1-diphosphate. Its pathway is pyrimidine metabolism; UMP biosynthesis via de novo pathway; UMP from orotate: step 1/2. In terms of biological role, catalyzes the transfer of a ribosyl phosphate group from 5-phosphoribose 1-diphosphate to orotate, leading to the formation of orotidine monophosphate (OMP). The polypeptide is Orotate phosphoribosyltransferase (Acidithiobacillus ferrooxidans (strain ATCC 53993 / BNL-5-31) (Leptospirillum ferrooxidans (ATCC 53993))).